We begin with the raw amino-acid sequence, 340 residues long: Cathepsin B (340 aa).

The signal sequence occupies residues 1-17 (MSWSRSILCLLGAFANA). Positions 18 to 79 (RSIPYYPPLS…ERVDFAEDMD (62 aa)) are cleaved as a propeptide — activation peptide. Asn-38 carries N-linked (GlcNAc...) asparagine glycosylation. 6 cysteine pairs are disulfide-bonded: Cys-93–Cys-122, Cys-105–Cys-150, Cys-141–Cys-208, Cys-142–Cys-146, Cys-179–Cys-212, and Cys-187–Cys-198. The active site involves Cys-108. Residue Asn-192 is glycosylated (N-linked (GlcNAc...) asparagine). Active-site residues include His-279 and Asn-299.

The protein belongs to the peptidase C1 family. In terms of assembly, dimer of a heavy chain and a light chain cross-linked by a disulfide bond.

The protein resides in the lysosome. The enzyme catalyses Hydrolysis of proteins with broad specificity for peptide bonds. Preferentially cleaves -Arg-Arg-|-Xaa bonds in small molecule substrates (thus differing from cathepsin L). In addition to being an endopeptidase, shows peptidyl-dipeptidase activity, liberating C-terminal dipeptides.. Functionally, thiol protease which is believed to participate in intracellular degradation and turnover of proteins. Has also been implicated in tumor invasion and metastasis. The sequence is that of Cathepsin B (CTSB) from Gallus gallus (Chicken).